We begin with the raw amino-acid sequence, 271 residues long: Putative phosphoenolpyruvate synthase regulatory protein (271 aa).

Residue 151–158 (GVSRSGKT) coordinates ADP.

This sequence belongs to the pyruvate, phosphate/water dikinase regulatory protein family. PSRP subfamily.

The enzyme catalyses [pyruvate, water dikinase] + ADP = [pyruvate, water dikinase]-phosphate + AMP + H(+). The catalysed reaction is [pyruvate, water dikinase]-phosphate + phosphate + H(+) = [pyruvate, water dikinase] + diphosphate. Functionally, bifunctional serine/threonine kinase and phosphorylase involved in the regulation of the phosphoenolpyruvate synthase (PEPS) by catalyzing its phosphorylation/dephosphorylation. This chain is Putative phosphoenolpyruvate synthase regulatory protein, found in Burkholderia vietnamiensis (strain G4 / LMG 22486) (Burkholderia cepacia (strain R1808)).